The sequence spans 116 residues: Ribosome-binding factor A (116 aa).

This sequence belongs to the RbfA family. In terms of assembly, monomer. Binds 30S ribosomal subunits, but not 50S ribosomal subunits or 70S ribosomes.

The protein resides in the cytoplasm. Functionally, one of several proteins that assist in the late maturation steps of the functional core of the 30S ribosomal subunit. Associates with free 30S ribosomal subunits (but not with 30S subunits that are part of 70S ribosomes or polysomes). Required for efficient processing of 16S rRNA. May interact with the 5'-terminal helix region of 16S rRNA. The polypeptide is Ribosome-binding factor A (Chlorobium phaeobacteroides (strain DSM 266 / SMG 266 / 2430)).